The primary structure comprises 439 residues: Mitochondrial distribution and morphology protein 12 (439 aa).

In terms of domain architecture, SMP-LTD spans 1-439; that stretch reads MSIDVNWRFA…VYPSFWTFLI (439 aa). Disordered stretches follow at residues 70 to 103, 185 to 274, and 354 to 386; these read YEED…LNEP, GWSD…PPRM, and PEQQ…RHGG. A compositionally biased stretch (basic and acidic residues) spans 78–91; it reads TSDASEERGEEHSS. A compositionally biased stretch (polar residues) spans 215 to 245; it reads DTSNSTSRPSTANTLPSHPSGSSKNSGQAAT. Composition is skewed to basic and acidic residues over residues 247-261 and 362-371; these read RNDH…HLED and SAGDDHRPQS.

It belongs to the MDM12 family. In terms of assembly, component of the ER-mitochondria encounter structure (ERMES) or MDM complex, composed of mmm1, mdm10, mdm12 and mdm34. A mmm1 homodimer associates with one molecule of mdm12 on each side in a pairwise head-to-tail manner, and the SMP-LTD domains of mmm1 and mdm12 generate a continuous hydrophobic tunnel for phospholipid trafficking.

The protein resides in the mitochondrion outer membrane. Its subcellular location is the endoplasmic reticulum membrane. Functionally, component of the ERMES/MDM complex, which serves as a molecular tether to connect the endoplasmic reticulum (ER) and mitochondria. Components of this complex are involved in the control of mitochondrial shape and protein biogenesis, and function in nonvesicular lipid trafficking between the ER and mitochondria. Mdm12 is required for the interaction of the ER-resident membrane protein mmm1 and the outer mitochondrial membrane-resident beta-barrel protein mdm10. The mdm12-mmm1 subcomplex functions in the major beta-barrel assembly pathway that is responsible for biogenesis of all mitochondrial outer membrane beta-barrel proteins, and acts in a late step after the SAM complex. The mdm10-mdm12-mmm1 subcomplex further acts in the TOM40-specific pathway after the action of the mdm12-mmm1 complex. Essential for establishing and maintaining the structure of mitochondria and maintenance of mtDNA nucleoids. This is Mitochondrial distribution and morphology protein 12 from Aspergillus fumigatus (strain CBS 144.89 / FGSC A1163 / CEA10) (Neosartorya fumigata).